Here is a 618-residue protein sequence, read N- to C-terminus: UvrABC system protein C (618 aa).

In terms of domain architecture, GIY-YIG spans 13–92 (DKPGVYLMKN…IKKYRPKYNI (80 aa)). One can recognise a UVR domain in the interval 204–239 (LDIVENFKLNMEKAAGNLEFEKAAMLRDKINIIEKI).

Belongs to the UvrC family. As to quaternary structure, interacts with UvrB in an incision complex.

The protein resides in the cytoplasm. Its function is as follows. The UvrABC repair system catalyzes the recognition and processing of DNA lesions. UvrC both incises the 5' and 3' sides of the lesion. The N-terminal half is responsible for the 3' incision and the C-terminal half is responsible for the 5' incision. This is UvrABC system protein C from Clostridium botulinum (strain 657 / Type Ba4).